A 228-amino-acid chain; its full sequence is Aldehyde dehydrogenase 9 (228 aa).

76-81 (GSTETA) contributes to the NAD(+) binding site. Residues Glu99 and Cys132 contribute to the active site.

The protein belongs to the aldehyde dehydrogenase family.

The enzyme catalyses an aldehyde + NAD(+) + H2O = a carboxylate + NADH + 2 H(+). It functions in the pathway alcohol metabolism; ethanol degradation; acetate from ethanol: step 2/2. The sequence is that of Aldehyde dehydrogenase 9 (ALDH9) from Polyandrocarpa misakiensis (Tunicate).